We begin with the raw amino-acid sequence, 191 residues long: Holliday junction branch migration complex subunit RuvA (191 aa).

A domain I region spans residues 1 to 64 (MIRGVRGTLV…EDELALYGFA (64 aa)). Residues 65 to 136 (TEAELELFLS…ELRGRLPALT (72 aa)) are domain II. Positions 136–139 (TEVQ) are flexible linker. The interval 140 to 191 (AGEPIDQELVAALQALGYTAQEARQAATHPEVRRAPSLEERIVAALRQLAPP) is domain III.

The protein belongs to the RuvA family. As to quaternary structure, homotetramer. Forms an RuvA(8)-RuvB(12)-Holliday junction (HJ) complex. HJ DNA is sandwiched between 2 RuvA tetramers; dsDNA enters through RuvA and exits via RuvB. An RuvB hexamer assembles on each DNA strand where it exits the tetramer. Each RuvB hexamer is contacted by two RuvA subunits (via domain III) on 2 adjacent RuvB subunits; this complex drives branch migration. In the full resolvosome a probable DNA-RuvA(4)-RuvB(12)-RuvC(2) complex forms which resolves the HJ.

It is found in the cytoplasm. The RuvA-RuvB-RuvC complex processes Holliday junction (HJ) DNA during genetic recombination and DNA repair, while the RuvA-RuvB complex plays an important role in the rescue of blocked DNA replication forks via replication fork reversal (RFR). RuvA specifically binds to HJ cruciform DNA, conferring on it an open structure. The RuvB hexamer acts as an ATP-dependent pump, pulling dsDNA into and through the RuvAB complex. HJ branch migration allows RuvC to scan DNA until it finds its consensus sequence, where it cleaves and resolves the cruciform DNA. The chain is Holliday junction branch migration complex subunit RuvA from Thermomicrobium roseum (strain ATCC 27502 / DSM 5159 / P-2).